A 595-amino-acid chain; its full sequence is GPI mannosyltransferase 3 (595 aa).

Transmembrane regions (helical) follow at residues 58-78 (YAFPMLFEMSYYVAWILGVAT), 85-105 (LAHATALCGAVVPSGAAGVAA), 128-148 (GPRVVMAAVAACGEFYSVLLV), 185-207 (FFATRTFINSFEMTLTAVALYHW), 212-232 (GLDVGSLGFSASLAVAAFACL), 235-255 (PTNVLIWAVLGLFLVLNLVRS), 260-280 (LLLTLVAKVAAAGALAVCANI), 289-309 (GVLLPLLRFIEFNVTTPLAAF), 319-339 (LLQSVPLIVGYALPFFVGALL), and 413-433 (VQSLLYVLPVLSITAALVLNT).

It belongs to the glycosyltransferase 22 family. PIGB subfamily.

The protein localises to the endoplasmic reticulum membrane. Its pathway is glycolipid biosynthesis; glycosylphosphatidylinositol-anchor biosynthesis. Functionally, mannosyltransferase involved in glycosylphosphatidylinositol-anchor biosynthesis. Transfers the third mannose to Man2-GlcN-acyl-PI during GPI precursor assembly. In Eremothecium gossypii (strain ATCC 10895 / CBS 109.51 / FGSC 9923 / NRRL Y-1056) (Yeast), this protein is GPI mannosyltransferase 3 (GPI10).